Reading from the N-terminus, the 254-residue chain is MIRILLSNDDGISAPGIQTLASALREFAQVQIVAPDRNRSGASNALTLDSALRITTLSNGDIAVQQGTPTDCVYLGVNALMRPRPDIVVSGINAGPNLGDDVIYSGTVAAAMEGRHLGYPALAVSLNGHQHYDTAAAVTCRLLRALQRKPLRTGKILNINVPDLPLSEIKGIRVTRCGSRHPAEQVFCQQDPRGQDLYWIGPPGEKYDAGPDTDFAAVEQGYVSITPLQVDLTAYTAQEVVESWLANTEVDGEW.

Residues Asp9, Asp10, Ser40, and Asn93 each contribute to the a divalent metal cation site.

Belongs to the SurE nucleotidase family. The cofactor is a divalent metal cation.

It is found in the cytoplasm. The catalysed reaction is a ribonucleoside 5'-phosphate + H2O = a ribonucleoside + phosphate. It carries out the reaction a ribonucleoside 3'-phosphate + H2O = a ribonucleoside + phosphate. The enzyme catalyses [phosphate](n) + H2O = [phosphate](n-1) + phosphate + H(+). In terms of biological role, nucleotidase with a broad substrate specificity as it can dephosphorylate various ribo- and deoxyribonucleoside 5'-monophosphates and ribonucleoside 3'-monophosphates with highest affinity to 3'-AMP. Also hydrolyzes polyphosphate (exopolyphosphatase activity) with the preference for short-chain-length substrates (P20-25). Might be involved in the regulation of dNTP and NTP pools, and in the turnover of 3'-mononucleotides produced by numerous intracellular RNases (T1, T2, and F) during the degradation of various RNAs. This Yersinia pseudotuberculosis serotype O:1b (strain IP 31758) protein is 5'/3'-nucleotidase SurE.